A 653-amino-acid polypeptide reads, in one-letter code: Amyloid beta A4 precursor protein-binding family B member 1-interacting protein (653 aa).

A disordered region spans residues 82–141 (NNKSTAPFPPADASNSYHFHPPPMPSIITEDLSLLPPPPEFDPHYPPPPPDPLTEPKTQE). The span at 116 to 134 (LPPPPEFDPHYPPPPPDPL) shows a compositional bias: pro residues. The region spanning 165 to 253 (KKRIVKVHMI…IHFLEKNEKY (89 aa)) is the Ras-associating domain. Residues 295–404 (VPELEAALYL…WVTGIRIAKY (110 aa)) form the PH domain. Basic and acidic residues predominate over residues 462–481 (KHGEANKQEKKSSEVNKPET). The disordered stretch occupies residues 462–653 (KHGEANKQEK…ALQKKREPPT (192 aa)). The span at 585–604 (PAPPPPPPPPAPAANVPPLP) shows a compositional bias: pro residues. Basic residues predominate over residues 605–614 (VKKHPPKPPK).

Belongs to the MRL family.

The protein resides in the cell membrane. Its subcellular location is the cytoplasm. The protein localises to the cytoskeleton. Appears to function in the signal transduction from Ras activation to actin cytoskeletal remodeling. In Xenopus laevis (African clawed frog), this protein is Amyloid beta A4 precursor protein-binding family B member 1-interacting protein (apbb1ip).